A 141-amino-acid polypeptide reads, in one-letter code: Large ribosomal subunit protein uL11 (141 aa).

It belongs to the universal ribosomal protein uL11 family. As to quaternary structure, part of the ribosomal stalk of the 50S ribosomal subunit. Interacts with L10 and the large rRNA to form the base of the stalk. L10 forms an elongated spine to which L12 dimers bind in a sequential fashion forming a multimeric L10(L12)X complex. In terms of processing, one or more lysine residues are methylated.

Forms part of the ribosomal stalk which helps the ribosome interact with GTP-bound translation factors. The protein is Large ribosomal subunit protein uL11 of Streptococcus thermophilus (strain CNRZ 1066).